The sequence spans 320 residues: Cytochrome f (320 aa).

The first 35 residues, 1–35 (MHTKNLFYSRTQQITQYLSALLMMVILTRTSISSA), serve as a signal peptide directing secretion. Heme is bound by residues Tyr-36, Cys-56, Cys-59, and His-60. The chain crosses the membrane as a helical span at residues 286-306 (VQVLLFFFASIILAQIFLVLK).

It belongs to the cytochrome f family. In terms of assembly, the 4 large subunits of the cytochrome b6-f complex are cytochrome b6, subunit IV (17 kDa polypeptide, petD), cytochrome f and the Rieske protein, while the 4 small subunits are PetG, PetL, PetM and PetN. The complex functions as a dimer. Requires heme as cofactor.

It localises to the plastid thylakoid membrane. Its function is as follows. Component of the cytochrome b6-f complex, which mediates electron transfer between photosystem II (PSII) and photosystem I (PSI), cyclic electron flow around PSI, and state transitions. The sequence is that of Cytochrome f from Cuscuta gronovii (Common dodder).